The chain runs to 133 residues: Small ribosomal subunit protein eS24z (133 aa).

The disordered stretch occupies residues 104–133 (KSRKQIKERKNRAKKIRGVKKTKAGDAKKK). Residues 109–125 (IKERKNRAKKIRGVKKT) are compositionally biased toward basic residues.

This sequence belongs to the eukaryotic ribosomal protein eS24 family.

This is Small ribosomal subunit protein eS24z (RPS24A) from Arabidopsis thaliana (Mouse-ear cress).